A 255-amino-acid polypeptide reads, in one-letter code: ParA family protein CPn_0805/CP_1066/CPj0805/CpB0834 (255 aa).

This sequence belongs to the ParA family.

This is ParA family protein CPn_0805/CP_1066/CPj0805/CpB0834 from Chlamydia pneumoniae (Chlamydophila pneumoniae).